The following is a 176-amino-acid chain: Ribosome maturation factor RimM (176 aa).

A PRC barrel domain is found at 97-176 (EDEFYWRDLI…QILVDWDPDF (80 aa)).

It belongs to the RimM family. Binds ribosomal protein uS19.

Its subcellular location is the cytoplasm. Its function is as follows. An accessory protein needed during the final step in the assembly of 30S ribosomal subunit, possibly for assembly of the head region. Essential for efficient processing of 16S rRNA. May be needed both before and after RbfA during the maturation of 16S rRNA. It has affinity for free ribosomal 30S subunits but not for 70S ribosomes. The protein is Ribosome maturation factor RimM of Shewanella putrefaciens (strain CN-32 / ATCC BAA-453).